The chain runs to 494 residues: DNA-directed DNA/RNA polymerase mu (494 aa).

The interval 1–24 (MLPKRRRARVGSPSGDAASSTPPS) is disordered. A Phosphoserine modification is found at Ser-12. The BRCT domain maps to 22–122 (PPSTRFPGVA…QPVPVECRHR (101 aa)). The involved in ssDNA binding stretch occupies residues 323–332 (RGKLQGHDVD). Mg(2+) contacts are provided by Asp-330, Asp-332, and Asp-418.

Belongs to the DNA polymerase type-X family. Mg(2+) is required as a cofactor. Expressed in a number of tissues. Abundant in thymus.

It localises to the nucleus. The catalysed reaction is DNA(n) + a 2'-deoxyribonucleoside 5'-triphosphate = DNA(n+1) + diphosphate. Its function is as follows. Gap-filling polymerase involved in repair of DNA double-strand breaks by non-homologous end joining (NHEJ). Participates in immunoglobulin (Ig) light chain gene rearrangement in V(D)J recombination. This is DNA-directed DNA/RNA polymerase mu (POLM) from Homo sapiens (Human).